The following is a 257-amino-acid chain: (R)-2-haloacid dehalogenase (257 aa).

The protein belongs to the HAD-like hydrolase superfamily. S-2-haloalkanoic acid dehalogenase family.

The enzyme catalyses an (R)-2-haloacid + H2O = a (2S)-2-hydroxycarboxylate + a halide anion + H(+). Functionally, catalyzes the hydrolytic dehalogenation of small (R)-2-haloalkanoic acids to yield the corresponding (S)-2-hydroxyalkanoic acids. Acts on acids of short chain lengths, C(2) to C(4), with inversion of configuration at C-2. The polypeptide is (R)-2-haloacid dehalogenase (dehI) (Rhizobium sp. (strain NHG3)).